Consider the following 881-residue polypeptide: Valine--tRNA ligase (881 aa).

Residues 49 to 59 (PNVTGKLHLGH) carry the 'HIGH' region motif. The short motif at 526–530 (KMSKS) is the 'KMSKS' region element. Residue lysine 529 coordinates ATP. A coiled-coil region spans residues 810 to 881 (LADLINLDEE…VRQRLADLEK (72 aa)).

Belongs to the class-I aminoacyl-tRNA synthetase family. ValS type 1 subfamily. Monomer.

The protein localises to the cytoplasm. The catalysed reaction is tRNA(Val) + L-valine + ATP = L-valyl-tRNA(Val) + AMP + diphosphate. Its function is as follows. Catalyzes the attachment of valine to tRNA(Val). As ValRS can inadvertently accommodate and process structurally similar amino acids such as threonine, to avoid such errors, it has a 'posttransfer' editing activity that hydrolyzes mischarged Thr-tRNA(Val) in a tRNA-dependent manner. In Bacillus anthracis, this protein is Valine--tRNA ligase.